A 616-amino-acid chain; its full sequence is Chaperone protein HtpG (616 aa).

The segment at Met1 to Arg333 is a; substrate-binding. Positions Glu334 to Lys542 are b. The segment at Ile543–Leu616 is c.

Belongs to the heat shock protein 90 family. Homodimer.

It is found in the cytoplasm. In terms of biological role, molecular chaperone. Has ATPase activity. This Borreliella afzelii (strain PKo) (Borrelia afzelii) protein is Chaperone protein HtpG.